Reading from the N-terminus, the 342-residue chain is D-alanine--D-alanine ligase (342 aa).

Residues 132 to 326 (KLYAKECGIE…VAKHLPKSKN (195 aa)) form the ATP-grasp domain. Residue 159 to 210 (EYPVIIKPNHLGSSIGVSVVYDSSELEYALDVAFEFDDEVLIEPFIEGIEEY) coordinates ATP. Mg(2+) contacts are provided by Asp-282, Glu-294, and Asn-296.

It belongs to the D-alanine--D-alanine ligase family. Mg(2+) is required as a cofactor. Mn(2+) serves as cofactor.

The protein resides in the cytoplasm. It catalyses the reaction 2 D-alanine + ATP = D-alanyl-D-alanine + ADP + phosphate + H(+). Its pathway is cell wall biogenesis; peptidoglycan biosynthesis. Cell wall formation. This Nitratiruptor sp. (strain SB155-2) protein is D-alanine--D-alanine ligase.